A 213-amino-acid polypeptide reads, in one-letter code: Kynurenine formamidase (213 aa).

Tryptophan 18 lines the substrate pocket. Positions 48, 52, and 54 each coordinate Zn(2+). Histidine 58 serves as the catalytic Proton donor/acceptor. Zn(2+) contacts are provided by histidine 160 and glutamate 172.

The protein belongs to the Cyclase 1 superfamily. KynB family. As to quaternary structure, homodimer. It depends on Zn(2+) as a cofactor.

It carries out the reaction N-formyl-L-kynurenine + H2O = L-kynurenine + formate + H(+). Its pathway is amino-acid degradation; L-tryptophan degradation via kynurenine pathway; L-kynurenine from L-tryptophan: step 2/2. In terms of biological role, catalyzes the hydrolysis of N-formyl-L-kynurenine to L-kynurenine, the second step in the kynurenine pathway of tryptophan degradation. This is Kynurenine formamidase from Burkholderia orbicola (strain MC0-3).